Consider the following 724-residue polypeptide: Eukaryotic elongation factor 2 kinase (724 aa).

At A2 the chain carries N-acetylalanine. Residue S27 is modified to Phosphoserine. Residue S61 is modified to Phosphoserine; by autocatalysis. Phosphoserine is present on residues S70, S73, and S77. A calmodulin-binding region spans residues 80–93 (FKEAWKHAIEKAKH). Residues 115-325 (RYNAVTGEWL…ICQSMGLTPF (211 aa)) form the Alpha-type protein kinase domain. At S242 the chain carries Phosphoserine. 295-301 (GDGNLGV) provides a ligand contact to ATP. 2 positions are modified to phosphothreonine; by autocatalysis: T347 and T352. The disordered stretch occupies residues 353-476 (EEKCGSPRIR…HESDEDSLGS (124 aa)). The residue at position 358 (S358) is a Phosphoserine; by MAPK13 and CDK1. Positions 358 to 376 (SPRIRTLSSSRPPLLLRLS) are enriched in low complexity. S365 carries the post-translational modification Phosphoserine; by autocatalysis, RPS6KA1 and RPS6KB1. The span at 385–403 (SDVTFDSLPSSPSSATPHS) shows a compositional bias: polar residues. S391 bears the Phosphoserine mark. At S397 the chain carries Phosphoserine; by AMPK. 2 stretches are compositionally biased toward basic and acidic residues: residues 421–435 (GPRDHDRMDNHRDSE) and 444–469 (SEKRSDLDDPEPREHGHSNGNRRHES). 3 positions are modified to phosphoserine: S434, S444, and S469. Phosphoserine; by autocatalysis is present on S473. S476 carries the post-translational modification Phosphoserine. Position 499 is a phosphoserine; by PKA (S499).

This sequence belongs to the protein kinase superfamily. Alpha-type protein kinase family. As to quaternary structure, monomer or homodimer. Interacts with Calmodulin/CALM1; this interaction is strictly required for phosphorylation activity. In terms of processing, autophosphorylated at multiple residues, Thr-347 being the major site. Phosphorylated by AMP-activated protein kinase AMPK at Ser-397 leading to EEF2K activation and protein synthesis inhibition. Phosphorylated by TRPM7 at Ser-77 resulting in improved protein stability, higher EE2F phosphorylated and subsequently reduced rate of protein synthesis. Phosphorylation by other kinases such as CDK1 and MAPK13 at Ser-358 or RPS6KA1 and RPS6KB1 at Ser-365 instead decrease EEF2K activity and promote protein synthesis. In terms of tissue distribution, ubiquitously expressed. Particularly abundant in skeletal muscle and heart.

It catalyses the reaction [translation elongation factor 2] + ATP = [translation elongation factor 2]-phosphate + ADP + H(+). Undergoes calcium/calmodulin-dependent intramolecular autophosphorylation, and this results in it becoming partially calcium/calmodulin-independent. Threonine kinase that regulates protein synthesis by controlling the rate of peptide chain elongation. Upon activation by a variety of upstream kinases including AMPK or TRPM7, phosphorylates the elongation factor EEF2 at a single site, renders it unable to bind ribosomes and thus inactive. In turn, the rate of protein synthesis is reduced. This Mus musculus (Mouse) protein is Eukaryotic elongation factor 2 kinase (Eef2k).